Here is a 433-residue protein sequence, read N- to C-terminus: Trigger factor (433 aa).

The PPIase FKBP-type domain occupies 161–246 (GKRVSIDFVG…VNKVEARELP (86 aa)).

It belongs to the FKBP-type PPIase family. Tig subfamily.

The protein resides in the cytoplasm. It catalyses the reaction [protein]-peptidylproline (omega=180) = [protein]-peptidylproline (omega=0). In terms of biological role, involved in protein export. Acts as a chaperone by maintaining the newly synthesized protein in an open conformation. Functions as a peptidyl-prolyl cis-trans isomerase. The chain is Trigger factor from Vibrio cholerae serotype O1 (strain ATCC 39541 / Classical Ogawa 395 / O395).